A 235-amino-acid chain; its full sequence is MKAFFAVLAVVSAPFVLGHYTFPDFIEPSGTVTGDWVYVRETQNHYSNGPVTDVTSPEFRCYELDLQNTAGQTQTATVSAGDTVGFKANSAIYHPGYLDVMMSPASPAANSPEAGTGQTWFKIYEEKPQFENGQLVFDTTQQEVTFTIPKSLPSGQYLLRIEQIALHVASSYGGAQFYIGCAQLNVENGGNGTPGPLVSIPGVYTGYEPGILINIYNLPKNFTGYPAPGPAVWQG.

The signal sequence occupies residues 1–18 (MKAFFAVLAVVSAPFVLG). His19 contributes to the Cu(2+) binding site. A glycan (O-linked (Man...) serine) is linked at Ser29. A disulfide bridge connects residues Cys61 and Cys181. Residue His94 participates in Cu(2+) binding. The O2 site is built by His167 and Gln176. Position 178 (Tyr178) interacts with Cu(2+). N-linked (GlcNAc...) asparagine glycosylation occurs at Asn221.

The protein belongs to the polysaccharide monooxygenase AA9 family. The cofactor is Cu(2+).

Its subcellular location is the secreted. It catalyses the reaction [(1-&gt;4)-beta-D-glucosyl]n+m + reduced acceptor + O2 = 4-dehydro-beta-D-glucosyl-[(1-&gt;4)-beta-D-glucosyl]n-1 + [(1-&gt;4)-beta-D-glucosyl]m + acceptor + H2O.. Functionally, lytic polysaccharide monooxygenase (LPMO) that depolymerizes crystalline and amorphous polysaccharides via the oxidation of scissile alpha- or beta-(1-4)-glycosidic bonds, yielding only C1 oxidation products. Catalysis by LPMOs requires the reduction of the active-site copper from Cu(II) to Cu(I) by a reducing agent and H(2)O(2) or O(2) as a cosubstrate. The protein is AA9 family lytic polysaccharide monooxygenase D of Phanerodontia chrysosporium (White-rot fungus).